The sequence spans 382 residues: Queuine tRNA-ribosyltransferase (382 aa).

The active-site Proton acceptor is the Asp-96. Substrate is bound by residues 96–100 (DSGGF), Asp-151, Gln-194, and Gly-221. Residues 252–258 (GVGAPDS) are RNA binding. Residue Asp-271 is the Nucleophile of the active site. The segment at 276 to 280 (TRIAR) is RNA binding; important for wobble base 34 recognition. Cys-309, Cys-311, Cys-314, and His-340 together coordinate Zn(2+).

This sequence belongs to the queuine tRNA-ribosyltransferase family. As to quaternary structure, homodimer. Within each dimer, one monomer is responsible for RNA recognition and catalysis, while the other monomer binds to the replacement base PreQ1. Requires Zn(2+) as cofactor.

It carries out the reaction 7-aminomethyl-7-carbaguanine + guanosine(34) in tRNA = 7-aminomethyl-7-carbaguanosine(34) in tRNA + guanine. It functions in the pathway tRNA modification; tRNA-queuosine biosynthesis. Catalyzes the base-exchange of a guanine (G) residue with the queuine precursor 7-aminomethyl-7-deazaguanine (PreQ1) at position 34 (anticodon wobble position) in tRNAs with GU(N) anticodons (tRNA-Asp, -Asn, -His and -Tyr). Catalysis occurs through a double-displacement mechanism. The nucleophile active site attacks the C1' of nucleotide 34 to detach the guanine base from the RNA, forming a covalent enzyme-RNA intermediate. The proton acceptor active site deprotonates the incoming PreQ1, allowing a nucleophilic attack on the C1' of the ribose to form the product. After dissociation, two additional enzymatic reactions on the tRNA convert PreQ1 to queuine (Q), resulting in the hypermodified nucleoside queuosine (7-(((4,5-cis-dihydroxy-2-cyclopenten-1-yl)amino)methyl)-7-deazaguanosine). The chain is Queuine tRNA-ribosyltransferase from Lactococcus lactis subsp. cremoris (strain MG1363).